Consider the following 556-residue polypeptide: Guard cell S-type anion channel SLAC1 (556 aa).

The tract at residues 1 to 103 (MERKQSNAHS…GIINGGDGRK (103 aa)) is disordered. Residues 1 to 189 (MERKQSNAHS…EQWPFLLRFP (189 aa)) lie on the Cytoplasmic side of the membrane. The stretch at 10 to 36 (STFADINEVEDEAEQELQQQENNNNKR) forms a coiled coil. Low complexity predominate over residues 25–34 (ELQQQENNNN). At Ser-59 the chain carries Phosphoserine; by SRK2E. Residues 69–79 (RESRERDDKKS) are compositionally biased toward basic and acidic residues. Ser-86, Ser-113, and Ser-120 each carry phosphoserine; by SRK2E. Gly residues predominate over residues 86 to 99 (SFGGFESGGIINGG). The residue at position 146 (Ser-146) is a Phosphoserine. The helical transmembrane segment at 190–210 (IGCFGICLGLSSQAVLWLALA) threads the bilayer. Topologically, residues 211 to 216 (KSPATN) are extracellular. A helical transmembrane segment spans residues 217–237 (FLHITPLINLVVWLFSLVVLV). At 238-265 (SVSFTYILKCIFYFEAVKREYFHPVRVN) the chain is on the cytoplasmic side. Residues 266–286 (FFFAPWVVCMFLAISVPPMFS) form a helical membrane-spanning segment. The Extracellular segment spans residues 287 to 295 (PNRKYLHPA). The chain crosses the membrane as a helical span at residues 296-316 (IWCVFMGPYFFLELKIYGQWL). Over 317–325 (SGGKRRLCK) the chain is Cytoplasmic. Residues 326–346 (VANPSSHLSVVGNFVGAILAS) traverse the membrane as a helical segment. Residues 347–352 (KVGWDE) are Extracellular-facing. A helical membrane pass occupies residues 353–373 (VAKFLWAVGFAHYLVVFVTLY). At 374-388 (QRLPTSEALPKELHP) the chain is on the cytoplasmic side. A helical membrane pass occupies residues 389 to 409 (VYSMFIAAPSAASIAWNTIYG). Residues 410 to 418 (QFDGCSRTC) are Extracellular-facing. Residues 419–439 (FFIALFLYISLVARINFFTGF) form a helical membrane-spanning segment. A topological domain (cytoplasmic) is located at residue Lys-440. The helical transmembrane segment at 441–463 (FSVAWWSYTFPMTTASVATIKYA) threads the bilayer. Residues 464 to 479 (EAVPGYPSRALALTLS) are Extracellular-facing. The helical transmembrane segment at 480–500 (FISTAMVCVLFVSTLLHAFVW) threads the bilayer. The Cytoplasmic portion of the chain corresponds to 501–556 (QTLFPNDLAIAITKRKLTREKKPFKRAYDLKRWTKQALAKKISAEKDFEAEEESHH).

This sequence belongs to the SLAC1 S-type anion channel family. In terms of assembly, homotrimer. Interacts with SRK2E, CPK6, CPK21, CPK23 and PP2CA. The channel is inactivated upon PP2CA and ABI1 binding. Interacts with KAT1, KAT2, KAT3/KC1 and AKT2. Interacts with GHR1. Post-translationally, phosphorylation by SRK2E, especially on Ser-120, activates the channel. Also phosphorylated and activated by CPK21 and CPK23. Abscisic acid (ABA) promotes phosphorylation. This phosphorylation is inhibited by ABI1. Phosphorylated and activated by GHR1; this phosphorylation is repressed by ABI2 but not ABI1. Phosphorylated by HT1 on N-terminus but not C-terminus. As to expression, preferentially expressed in guard cells. Also detected in the vascular strands close to the leaf margins.

The protein resides in the cell membrane. With respect to regulation, activated by GHR1-mediated phosphorylation which is negatively regulated by ABI2 but not ABI1. Activation by SRK2E/OST1 and GHR1 is repressed by HT1. Functionally, slow, weak voltage-dependent S-type anion efflux channel involved in maintenance of anion homeostasis. Cl(-) efflux through SLAC1 causes membrane depolarization, which activates outward-rectifying K1 channels, leading to KCl and water efflux to reduce turgor further and cause stomatal closure, that reduces water loss and promotes leaf turgor. Essential for stomatal closure in response to CO(2), abscisic acid (ABA), ozone O(3), light/dark transitions, humidity change, calcium ions, hydrogen peroxide H(2)O(2), reactive oxygen species (ROS), and nitric oxide. Binds to the highly selective inward-rectifying potassium channels KAT1 and AKT2, and inhibits their activities. Functions as an essential negative regulator of inward potassium channels in guard cells. Essential for the efficient stomatal closure and opening in guard cells. Involved in the local and/or systemic stomatal responses (e.g. stomatal closure) to light stress. This Arabidopsis thaliana (Mouse-ear cress) protein is Guard cell S-type anion channel SLAC1.